The primary structure comprises 390 residues: GTPase Obg (390 aa).

The region spanning 1 to 159 (MKFVDEASIL…RELLLELMLL (159 aa)) is the Obg domain. Positions 127–147 (NTRFKSSVNRTPRQKTNGTPG) are disordered. A compositionally biased stretch (polar residues) spans 129–145 (RFKSSVNRTPRQKTNGT). The OBG-type G domain maps to 160 to 333 (ADVGMLGMPN…LCWDVMTFII (174 aa)). Residues 166-173 (GMPNAGKS), 191-195 (FTTLV), 213-216 (DIPG), 283-286 (NKID), and 314-316 (SAA) each bind GTP. Residues S173 and T193 each contribute to the Mg(2+) site.

This sequence belongs to the TRAFAC class OBG-HflX-like GTPase superfamily. OBG GTPase family. Monomer. The cofactor is Mg(2+).

Its subcellular location is the cytoplasm. Functionally, an essential GTPase which binds GTP, GDP and possibly (p)ppGpp with moderate affinity, with high nucleotide exchange rates and a fairly low GTP hydrolysis rate. Plays a role in control of the cell cycle, stress response, ribosome biogenesis and in those bacteria that undergo differentiation, in morphogenesis control. In Shigella dysenteriae serotype 1 (strain Sd197), this protein is GTPase Obg.